Here is a 201-residue protein sequence, read N- to C-terminus: 3-isopropylmalate dehydratase small subunit (201 aa).

The protein belongs to the LeuD family. LeuD type 1 subfamily. As to quaternary structure, heterodimer of LeuC and LeuD.

The enzyme catalyses (2R,3S)-3-isopropylmalate = (2S)-2-isopropylmalate. It functions in the pathway amino-acid biosynthesis; L-leucine biosynthesis; L-leucine from 3-methyl-2-oxobutanoate: step 2/4. In terms of biological role, catalyzes the isomerization between 2-isopropylmalate and 3-isopropylmalate, via the formation of 2-isopropylmaleate. In Shewanella sp. (strain MR-4), this protein is 3-isopropylmalate dehydratase small subunit.